We begin with the raw amino-acid sequence, 212 residues long: Ras-related protein Rab-2A (212 aa).

The residue at position 2 (Ala-2) is an N-acetylalanine. Positions 2–19 are required for interaction with PRKCI; sequence AYAYLFKYIIIGDTGVGK. The GTP site is built by Gly-16, Val-17, Gly-18, Lys-19, Ser-20, Cys-21, and Thr-38. Ser-20 contacts Mg(2+). A Switch 1 motif is present at residues 37–42; sequence LTIGVE. Residues Thr-38 and Asp-61 each coordinate Mg(2+). Positions 63-72 match the Switch 2 motif; sequence AGQESFRSIT. Residues Gly-64, Asn-119, Lys-120, Asp-122, Ala-150, and Lys-151 each contribute to the GTP site. 2 S-geranylgeranyl cysteine lipidation sites follow: Cys-211 and Cys-212.

The protein belongs to the small GTPase superfamily. Rab family. As to quaternary structure, interacts with PRKCI. Interacts with TRIP11. Interacts (in GTP-bound form) with GARIN1B. Interacts (GTP-bound) with HOPS complex component VPS39; interaction contributes to obtaining a functional HOPS complex that promotes autophagosome-lysosome membrane fusion driven by STX17-SNAP29-VAMP8. May interact with VPS41. Mg(2+) is required as a cofactor. Prenylated. Prenylation is required for association with cellular membranes.

The protein resides in the endoplasmic reticulum-Golgi intermediate compartment membrane. It is found in the melanosome. Its subcellular location is the endoplasmic reticulum membrane. The protein localises to the golgi apparatus membrane. It localises to the cytoplasmic vesicle. The protein resides in the secretory vesicle. It is found in the acrosome. Its subcellular location is the autophagosome membrane. It carries out the reaction GTP + H2O = GDP + phosphate + H(+). With respect to regulation, regulated by guanine nucleotide exchange factors (GEFs) which promote the exchange of bound GDP for free GTP, GTPase activating proteins (GAPs) which increase the GTP hydrolysis activity, and GDP dissociation inhibitors (GDIs) which inhibit the dissociation of the nucleotide from the GTPase. In terms of biological role, the small GTPases Rab are key regulators of intracellular membrane trafficking, from the formation of transport vesicles to their fusion with membranes. Rabs cycle between active GTP-bound and inactive GDP-bound states. In their active state, drive transport of vesicular carriers from donor organelles to acceptor organelles to regulate the membrane traffic that maintains organelle identity and morphology. RAB2A regulates autophagy by promoting autophagosome-lysosome fusion via recruitment of the HOPS endosomal tethering complex; this process involves autophagosomal RAB2A and lysosomal RAB39A recruitment of HOPS subcomplexes VPS39-VPS11 and VPS41-VPS16-VPS18-VPS33A, respectively, which assemble into a functional complex to mediate membrane tethering and SNAREs-driven membrane fusion. Required for protein transport from the endoplasmic reticulum to the Golgi complex. Regulates the compacted morphology of the Golgi. Together with RAB2B, redundantly required for efficient autophagic flux. The sequence is that of Ras-related protein Rab-2A (RAB2A) from Canis lupus familiaris (Dog).